The primary structure comprises 344 residues: MTSNFSQATLQLCYENVNASCIKTPYSPGLRVLLYMVFGFGAVLAVCGNLLVVISVLHFKQLHSPANFLIASLASADFLVGISVMPFSMVRSIESCWYFGDTFCSLHSCCDVAFCYSSALHLCFISVDRYIAVTDPLVYPTKFTVSVSGICISISWILPLVYSSAVFYTGISAMGIENLVSALNCVGGCQVVVNQDWVLISFLLFFIPTLVMIILYSKIFLVAKQQAVKIETSVSGSKGESSLESHKARVAKRERKAAKTLGVTVLAFIVSWLPYTIDTLIDAFMGFITPAYVYEFCCWSAYYNSAMNPLIYAFFYPWFRKAMKLILSGKILKGHSSTTSLFSE.

The Extracellular portion of the chain corresponds to 1–36 (MTSNFSQATLQLCYENVNASCIKTPYSPGLRVLLYM). N-linked (GlcNAc...) asparagine glycosylation is found at Asn4 and Asn18. 2 disulfides stabilise this stretch: Cys21–Cys185 and Cys96–Cys189. A helical membrane pass occupies residues 37–57 (VFGFGAVLAVCGNLLVVISVL). The Cytoplasmic portion of the chain corresponds to 58-67 (HFKQLHSPAN). Residues 68 to 88 (FLIASLASADFLVGISVMPFS) form a helical membrane-spanning segment. Over 89-102 (MVRSIESCWYFGDT) the chain is Extracellular. A helical transmembrane segment spans residues 103–127 (FCSLHSCCDVAFCYSSALHLCFISV). The Cytoplasmic portion of the chain corresponds to 128–146 (DRYIAVTDPLVYPTKFTVS). Residues 147–167 (VSGICISISWILPLVYSSAVF) form a helical membrane-spanning segment. Residues 168–196 (YTGISAMGIENLVSALNCVGGCQVVVNQD) are Extracellular-facing. A helical membrane pass occupies residues 197 to 217 (WVLISFLLFFIPTLVMIILYS). Topologically, residues 218–260 (KIFLVAKQQAVKIETSVSGSKGESSLESHKARVAKRERKAAKT) are cytoplasmic. The helical transmembrane segment at 261-281 (LGVTVLAFIVSWLPYTIDTLI) threads the bilayer. The Extracellular segment spans residues 282 to 295 (DAFMGFITPAYVYE). Residues 296 to 319 (FCCWSAYYNSAMNPLIYAFFYPWF) traverse the membrane as a helical segment. The Cytoplasmic portion of the chain corresponds to 320–344 (RKAMKLILSGKILKGHSSTTSLFSE).

Belongs to the G-protein coupled receptor 1 family.

It localises to the cell membrane. In terms of biological role, olfactory receptor activated by trace amines, such as N-methylpiperidine and N,N-dimethylcyclohexylamine. Trace amine compounds are enriched in animal body fluids and act on trace amine-associated receptors (TAARs) to elicit both intraspecific and interspecific innate behaviors. Ligand-binding causes a conformation change that triggers signaling via G(s)-class of G alpha proteins (GNAL or GNAS). The chain is Trace amine-associated receptor 8c from Rattus norvegicus (Rat).